The following is a 262-amino-acid chain: Acyl-[acyl-carrier-protein]--UDP-N-acetylglucosamine O-acyltransferase (262 aa).

It belongs to the transferase hexapeptide repeat family. LpxA subfamily. Homotrimer.

It localises to the cytoplasm. It carries out the reaction a (3R)-hydroxyacyl-[ACP] + UDP-N-acetyl-alpha-D-glucosamine = a UDP-3-O-[(3R)-3-hydroxyacyl]-N-acetyl-alpha-D-glucosamine + holo-[ACP]. It functions in the pathway glycolipid biosynthesis; lipid IV(A) biosynthesis; lipid IV(A) from (3R)-3-hydroxytetradecanoyl-[acyl-carrier-protein] and UDP-N-acetyl-alpha-D-glucosamine: step 1/6. Functionally, involved in the biosynthesis of lipid A, a phosphorylated glycolipid that anchors the lipopolysaccharide to the outer membrane of the cell. The chain is Acyl-[acyl-carrier-protein]--UDP-N-acetylglucosamine O-acyltransferase from Pasteurella multocida (strain Pm70).